Consider the following 84-residue polypeptide: NADH-ubiquinone oxidoreductase chain 4L (84 aa).

A run of 2 helical transmembrane segments spans residues 18 to 38 and 51 to 71; these read IISLLIAIEILLLTVTVKIIY and FALFIITLAGAESAIGLSLLV.

The protein belongs to the complex I subunit 4L family.

The protein localises to the mitochondrion membrane. It catalyses the reaction a ubiquinone + NADH + 5 H(+)(in) = a ubiquinol + NAD(+) + 4 H(+)(out). Core subunit of the mitochondrial membrane respiratory chain NADH dehydrogenase (Complex I) that is believed to belong to the minimal assembly required for catalysis. Complex I functions in the transfer of electrons from NADH to the respiratory chain. The immediate electron acceptor for the enzyme is believed to be ubiquinone. This is NADH-ubiquinone oxidoreductase chain 4L (ND4L) from Debaryomyces hansenii (strain ATCC 36239 / CBS 767 / BCRC 21394 / JCM 1990 / NBRC 0083 / IGC 2968) (Yeast).